Consider the following 557-residue polypeptide: 2-succinyl-5-enolpyruvyl-6-hydroxy-3-cyclohexene-1-carboxylate synthase (557 aa).

It belongs to the TPP enzyme family. MenD subfamily. In terms of assembly, homodimer. Requires Mg(2+) as cofactor. The cofactor is Mn(2+). Thiamine diphosphate serves as cofactor.

It carries out the reaction isochorismate + 2-oxoglutarate + H(+) = 5-enolpyruvoyl-6-hydroxy-2-succinyl-cyclohex-3-ene-1-carboxylate + CO2. Its pathway is quinol/quinone metabolism; 1,4-dihydroxy-2-naphthoate biosynthesis; 1,4-dihydroxy-2-naphthoate from chorismate: step 2/7. It functions in the pathway quinol/quinone metabolism; menaquinone biosynthesis. Its function is as follows. Catalyzes the thiamine diphosphate-dependent decarboxylation of 2-oxoglutarate and the subsequent addition of the resulting succinic semialdehyde-thiamine pyrophosphate anion to isochorismate to yield 2-succinyl-5-enolpyruvyl-6-hydroxy-3-cyclohexene-1-carboxylate (SEPHCHC). This chain is 2-succinyl-5-enolpyruvyl-6-hydroxy-3-cyclohexene-1-carboxylate synthase, found in Staphylococcus aureus (strain USA300).